The following is a 213-amino-acid chain: Maleamate amidohydrolase (213 aa).

Residue cysteine 154 is the Nucleophile of the active site.

Belongs to the isochorismatase family.

It catalyses the reaction maleamate + H2O = maleate + NH4(+). Its pathway is cofactor degradation; nicotinate degradation. Its function is as follows. Maleamate amidase that transforms maleamate into maleate and ammonia in the aerobic nicotinate degradation pathway. This chain is Maleamate amidohydrolase (nicF), found in Pseudomonas putida (strain ATCC 47054 / DSM 6125 / CFBP 8728 / NCIMB 11950 / KT2440).